Reading from the N-terminus, the 304-residue chain is Quinolinate synthase (304 aa).

Iminosuccinate contacts are provided by His24 and Ser41. Residue Cys86 participates in [4Fe-4S] cluster binding. Iminosuccinate-binding positions include 112 to 114 (YVN) and Ser129. Cys171 contributes to the [4Fe-4S] cluster binding site. Residues 197–199 (HPE) and Thr214 contribute to the iminosuccinate site. Cys259 contributes to the [4Fe-4S] cluster binding site.

It belongs to the quinolinate synthase family. Type 2 subfamily. Requires [4Fe-4S] cluster as cofactor.

The protein localises to the cytoplasm. The enzyme catalyses iminosuccinate + dihydroxyacetone phosphate = quinolinate + phosphate + 2 H2O + H(+). It functions in the pathway cofactor biosynthesis; NAD(+) biosynthesis; quinolinate from iminoaspartate: step 1/1. In terms of biological role, catalyzes the condensation of iminoaspartate with dihydroxyacetone phosphate to form quinolinate. This Geobacter sp. (strain M21) protein is Quinolinate synthase.